The sequence spans 152 residues: Cell division protein SepF (152 aa).

The segment at 21–56 (EYIETEQDHPEEHEQQKDKQPAYAQKPQGKQNVVSL) is disordered. Positions 26–40 (EQDHPEEHEQQKDKQ) are enriched in basic and acidic residues.

The protein belongs to the SepF family. As to quaternary structure, homodimer. Interacts with FtsZ.

Its subcellular location is the cytoplasm. Cell division protein that is part of the divisome complex and is recruited early to the Z-ring. Probably stimulates Z-ring formation, perhaps through the cross-linking of FtsZ protofilaments. Its function overlaps with FtsA. The sequence is that of Cell division protein SepF from Bacillus velezensis (strain DSM 23117 / BGSC 10A6 / LMG 26770 / FZB42) (Bacillus amyloliquefaciens subsp. plantarum).